Here is a 64-residue protein sequence, read N- to C-terminus: Large ribosomal subunit protein uL30 (64 aa).

It belongs to the universal ribosomal protein uL30 family. In terms of assembly, part of the 50S ribosomal subunit.

This is Large ribosomal subunit protein uL30 from Beijerinckia indica subsp. indica (strain ATCC 9039 / DSM 1715 / NCIMB 8712).